The sequence spans 388 residues: Mycinamicin VIII C21 methyl hydroxylase (388 aa).

Positions 87, 91, 279, 335, and 337 each coordinate heme.

This sequence belongs to the cytochrome P450 family. Heme serves as cofactor.

It functions in the pathway antibiotic biosynthesis; mycinamicin biosynthesis. Functionally, involved in the biosynthesis of mycinamicin, a 16-membered macrolide antibiotic. Catalyzes hydroxylation at the C21 methyl group of mycinamicin VIII, the earliest macrolide form in the postpolyketide synthase tailoring pathway, leading to mycinamicin VII. Uses ferredoxin MycCII in electron transfer for catalysis. The sequence is that of Mycinamicin VIII C21 methyl hydroxylase from Micromonospora griseorubida.